Reading from the N-terminus, the 79-residue chain is Probable [Fe-S]-dependent transcriptional repressor (79 aa).

Iron-sulfur cluster contacts are provided by cysteine 56, cysteine 61, cysteine 64, and cysteine 70.

Belongs to the FeoC family.

Functionally, may function as a transcriptional regulator that controls feoABC expression. This is Probable [Fe-S]-dependent transcriptional repressor from Serratia proteamaculans (strain 568).